A 280-amino-acid polypeptide reads, in one-letter code: MNGWAGVCLITHCLNTRSRTYVALNMLAFARTPRGVPSCLFNKVWVSRYALVLILMVCASESSTSWAVTSNGLPNCSTVTRTAGQDAELHGPAPLSCNVTQWGRYENGSTPVLWCTLRGSRMRVSLGHRVAFGCSWKTFFIYNVSESSGGTYYQKGYNCTDKHITLSCFNLTVVPRAVQSTTTVMTPTLVTNSTFSVSLVALRLTTNSSAFGHAIYQRQQRVENGTLSKNITNLAFTYGSWGVAMLLFAAVMVLVDLGLPQSAWRRWRSHVDDEERGLLM.

10 N-linked (GlcNAc...) asparagine; by host glycosylation sites follow: Asn-75, Asn-98, Asn-107, Asn-143, Asn-158, Asn-170, Asn-192, Asn-207, Asn-224, and Asn-230. A helical membrane pass occupies residues 235-255 (AFTYGSWGVAMLLFAAVMVLV).

It belongs to the RL11 family.

It localises to the host membrane. This is an uncharacterized protein from Human cytomegalovirus (strain Merlin) (HHV-5).